The primary structure comprises 185 residues: Protein GrpE (185 aa).

The segment at M1 to Q37 is disordered.

It belongs to the GrpE family. Homodimer.

The protein localises to the cytoplasm. Its function is as follows. Participates actively in the response to hyperosmotic and heat shock by preventing the aggregation of stress-denatured proteins, in association with DnaK and GrpE. It is the nucleotide exchange factor for DnaK and may function as a thermosensor. Unfolded proteins bind initially to DnaJ; upon interaction with the DnaJ-bound protein, DnaK hydrolyzes its bound ATP, resulting in the formation of a stable complex. GrpE releases ADP from DnaK; ATP binding to DnaK triggers the release of the substrate protein, thus completing the reaction cycle. Several rounds of ATP-dependent interactions between DnaJ, DnaK and GrpE are required for fully efficient folding. The sequence is that of Protein GrpE from Bacillus pumilus (strain SAFR-032).